A 489-amino-acid polypeptide reads, in one-letter code: Aerolysin (489 aa).

Positions Met-1–Gly-24 are cleaved as a signal peptide. 2 disulfide bridges follow: Cys-44/Cys-100 and Cys-184/Cys-189. The interaction with host N-linked glycan stretch occupies residues Trp-70 to Tyr-86. The segment at Tyr-257 to Trp-289 is part of the transmembrane beta-barrel after proteolytic activation of the toxin and insertion into the host membrane. The segment at Arg-347–His-356 is interaction with glycans from host GPI-anchor. Positions Thr-445–Gln-489 are excised as a propeptide.

Belongs to the aerolysin family. Homodimer in solution; homoheptamer in the host membrane. After binding to GPI-anchored proteins in target membranes and proteolytic removal of the C-terminal propeptide, the protein assembles into a heptameric pre-pore complex. A further conformation change leads to insertion into the host membrane. In terms of processing, proteolytic cleavage and subsequent release of the propeptide trigger a major conformation change, leading to the formation of a heptameric pre-pore that then inserts into the host membrane.

Its subcellular location is the secreted. It localises to the host cell membrane. Its function is as follows. Secreted, cytolytic toxin that forms pores in host membranes after proteolytic removal of a C-terminal propeptide, leading to destruction of the membrane permeability barrier and cell death. The pores are formed by transmembrane beta-strands and are approximately 3 nm in diameter. This Aeromonas salmonicida protein is Aerolysin (ash3).